The sequence spans 105 residues: DNA-directed RNA polymerase subunit omega (105 aa).

Belongs to the RNA polymerase subunit omega family. In terms of assembly, the RNAP catalytic core consists of 2 alpha, 1 beta, 1 beta' and 1 omega subunit. When a sigma factor is associated with the core the holoenzyme is formed, which can initiate transcription.

The enzyme catalyses RNA(n) + a ribonucleoside 5'-triphosphate = RNA(n+1) + diphosphate. Promotes RNA polymerase assembly. Latches the N- and C-terminal regions of the beta' subunit thereby facilitating its interaction with the beta and alpha subunits. This is DNA-directed RNA polymerase subunit omega from Streptococcus equi subsp. equi (strain 4047).